The following is a 160-amino-acid chain: Ribosomal RNA large subunit methyltransferase H (160 aa).

S-adenosyl-L-methionine contacts are provided by residues Leu-76, Gly-108, and 127–132; that span reads LGKMTW.

Belongs to the RNA methyltransferase RlmH family. As to quaternary structure, homodimer.

The protein localises to the cytoplasm. It catalyses the reaction pseudouridine(1915) in 23S rRNA + S-adenosyl-L-methionine = N(3)-methylpseudouridine(1915) in 23S rRNA + S-adenosyl-L-homocysteine + H(+). Functionally, specifically methylates the pseudouridine at position 1915 (m3Psi1915) in 23S rRNA. The chain is Ribosomal RNA large subunit methyltransferase H from Rhizobium johnstonii (strain DSM 114642 / LMG 32736 / 3841) (Rhizobium leguminosarum bv. viciae).